Here is a 121-residue protein sequence, read N- to C-terminus: MARISGVDIPREKRVEIALTYIYGVGLTRSQKILASTGVSPDTRVKDLSDADVQKLRAAAETFTLEGDLRRQEGMAMKRLQDIGCLRGRRHRMGLPVRGQRTRTNARTRRGARKTVAGKKK.

The tract at residues 99–121 (GQRTRTNARTRRGARKTVAGKKK) is disordered. A compositionally biased stretch (basic residues) spans 100–121 (QRTRTNARTRRGARKTVAGKKK).

This sequence belongs to the universal ribosomal protein uS13 family. In terms of assembly, part of the 30S ribosomal subunit. Forms a loose heterodimer with protein S19. Forms two bridges to the 50S subunit in the 70S ribosome.

Functionally, located at the top of the head of the 30S subunit, it contacts several helices of the 16S rRNA. In the 70S ribosome it contacts the 23S rRNA (bridge B1a) and protein L5 of the 50S subunit (bridge B1b), connecting the 2 subunits; these bridges are implicated in subunit movement. Contacts the tRNAs in the A and P-sites. In Synechococcus sp. (strain RCC307), this protein is Small ribosomal subunit protein uS13.